A 175-amino-acid chain; its full sequence is Putative lipoprotein LppP (175 aa).

An N-terminal signal peptide occupies residues 1 to 30 (MRRQRSAVPILALLALLALLALIVGLGASG). Cys31 carries the N-palmitoyl cysteine lipid modification. The S-diacylglycerol cysteine moiety is linked to residue Cys31.

The protein localises to the cell membrane. In Mycobacterium bovis (strain ATCC BAA-935 / AF2122/97), this protein is Putative lipoprotein LppP (lppP).